The chain runs to 411 residues: Basic leucine zipper 10 (411 aa).

Disordered stretches follow at residues 1 to 36, 76 to 99, 140 to 251, and 362 to 411; these read MNSI…DEVS, SLPS…DSGN, SVKP…NDLK, and NNFA…KCVD. Positions 24–36 are enriched in polar residues; the sequence is PDSSKPVTADEVS. Basic and acidic residues predominate over residues 89–98; it reads DSRFRDRDSG. 2 stretches are compositionally biased toward polar residues: residues 146 to 173 and 183 to 193; these read STSS…TSSL and SMKQVTSGSSR. Position 196 is a phosphoserine (serine 196). Positions 196–206 are enriched in acidic residues; the sequence is SDDEDLDEENE. In terms of domain architecture, bZIP spans 215–278; it reads DVKKSRRMLS…DEAAVGNRIL (64 aa). The basic motif stretch occupies residues 217–236; it reads KKSRRMLSNRESARRSRRRK. The short motif at 219–226 is the Nuclear localization signal element; it reads SRRMLSNR. Positions 243 to 257 are leucine-zipper; sequence LETQVNDLKGEHSSL. A compositionally biased stretch (polar residues) spans 368 to 390; that stretch reads PSQTSSPLQRIRNGQNHHVTPSA.

Belongs to the bZIP family. In terms of assembly, forms a heterodimer with BZIP1, BZIP2, BZIP9, BZIP11, BZIP44, BZIP53 and BZIP63. Interacts with ABI3 and forms a complex made of ABI3, BZIP53 and BZIP10. Binding with LSD1 leads to cytoplasmic retention. As to expression, expressed in roots, shoots, stems, young leaves, trichomes, hydathodes, siliques, seeds, and flowers, mostly in vascular tissues.

The protein localises to the nucleus. The protein resides in the cytoplasm. Its function is as follows. Transcription factor that binds to the C-box-like motif (5'-TGCTGACGTCA-3') and G-box-like motif (5'-CCACGTGGCC-3'), ABRE elements, of gene promoters. Binds to the 5'-ACGT-3' motif of seed storage protein (SSP) encoding gene promoters (e.g. At2S and CRU3) and promotes their expression in seeds when in complex with ABI3 and BZIP53. Involved in the defense responses to the biotrophic pathogen Hyaloperonospora parasitica and oxidative stress responses; mediates positively cell death. Promotes BZIP53-mediated response to hypoosmolarity stress that leads to POX1/PRODH1 accumulation. The chain is Basic leucine zipper 10 (BZIP10) from Arabidopsis thaliana (Mouse-ear cress).